We begin with the raw amino-acid sequence, 57 residues long: Small ribosomal subunit protein eS27 (57 aa).

The Zn(2+) site is built by cysteine 10, cysteine 13, cysteine 29, and cysteine 32. The segment at 10–32 adopts a C4-type zinc-finger fold; that stretch reads CPDCENEQSLFEKAASEVSCAVC.

It belongs to the eukaryotic ribosomal protein eS27 family. Part of the 30S ribosomal subunit. It depends on Zn(2+) as a cofactor.

This Haloarcula marismortui (strain ATCC 43049 / DSM 3752 / JCM 8966 / VKM B-1809) (Halobacterium marismortui) protein is Small ribosomal subunit protein eS27.